The sequence spans 218 residues: Imidazole glycerol phosphate synthase subunit HisH (218 aa).

Residues 1-213 form the Glutamine amidotransferase type-1 domain; that stretch reads MTTIIDYGIG…AALPTTEEAG (213 aa). Catalysis depends on Cys79, which acts as the Nucleophile. Active-site residues include His188 and Glu190.

As to quaternary structure, heterodimer of HisH and HisF.

Its subcellular location is the cytoplasm. The catalysed reaction is 5-[(5-phospho-1-deoxy-D-ribulos-1-ylimino)methylamino]-1-(5-phospho-beta-D-ribosyl)imidazole-4-carboxamide + L-glutamine = D-erythro-1-(imidazol-4-yl)glycerol 3-phosphate + 5-amino-1-(5-phospho-beta-D-ribosyl)imidazole-4-carboxamide + L-glutamate + H(+). It catalyses the reaction L-glutamine + H2O = L-glutamate + NH4(+). Its pathway is amino-acid biosynthesis; L-histidine biosynthesis; L-histidine from 5-phospho-alpha-D-ribose 1-diphosphate: step 5/9. IGPS catalyzes the conversion of PRFAR and glutamine to IGP, AICAR and glutamate. The HisH subunit catalyzes the hydrolysis of glutamine to glutamate and ammonia as part of the synthesis of IGP and AICAR. The resulting ammonia molecule is channeled to the active site of HisF. The polypeptide is Imidazole glycerol phosphate synthase subunit HisH (Salinibacter ruber (strain DSM 13855 / M31)).